Reading from the N-terminus, the 398-residue chain is Succinate--CoA ligase [ADP-forming] subunit beta (398 aa).

An ATP-grasp domain is found at 9-254 (KRLLHEYGAP…TSEEDPKEIE (246 aa)). Residues Lys46, 53-55 (GRG), Glu109, Ala112, and Glu117 contribute to the ATP site. Mg(2+)-binding residues include Asn209 and Asp223. Substrate is bound by residues Asn274 and 331 to 333 (GIM).

This sequence belongs to the succinate/malate CoA ligase beta subunit family. Heterotetramer of two alpha and two beta subunits. Mg(2+) serves as cofactor.

It carries out the reaction succinate + ATP + CoA = succinyl-CoA + ADP + phosphate. It catalyses the reaction GTP + succinate + CoA = succinyl-CoA + GDP + phosphate. It functions in the pathway carbohydrate metabolism; tricarboxylic acid cycle; succinate from succinyl-CoA (ligase route): step 1/1. In terms of biological role, succinyl-CoA synthetase functions in the citric acid cycle (TCA), coupling the hydrolysis of succinyl-CoA to the synthesis of either ATP or GTP and thus represents the only step of substrate-level phosphorylation in the TCA. The beta subunit provides nucleotide specificity of the enzyme and binds the substrate succinate, while the binding sites for coenzyme A and phosphate are found in the alpha subunit. The polypeptide is Succinate--CoA ligase [ADP-forming] subunit beta (Bartonella henselae (strain ATCC 49882 / DSM 28221 / CCUG 30454 / Houston 1) (Rochalimaea henselae)).